We begin with the raw amino-acid sequence, 348 residues long: Uroporphyrinogen decarboxylase (348 aa).

Substrate-binding positions include 24–28 (RQAGR), D73, Y150, S205, and H324.

The protein belongs to the uroporphyrinogen decarboxylase family. In terms of assembly, homodimer.

Its subcellular location is the cytoplasm. The enzyme catalyses uroporphyrinogen III + 4 H(+) = coproporphyrinogen III + 4 CO2. The protein operates within porphyrin-containing compound metabolism; protoporphyrin-IX biosynthesis; coproporphyrinogen-III from 5-aminolevulinate: step 4/4. Catalyzes the decarboxylation of four acetate groups of uroporphyrinogen-III to yield coproporphyrinogen-III. The protein is Uroporphyrinogen decarboxylase of Roseiflexus sp. (strain RS-1).